Consider the following 478-residue polypeptide: Cytochrome c-552 (478 aa).

An N-terminal signal peptide occupies residues 1–26; the sequence is MARKTLRARRFFSLIFPFFFITSVYA. Histidine 94 contributes to the heme c binding site. Heme-binding residues include cysteine 122, cysteine 125, and lysine 126. Cysteine 160, cysteine 163, histidine 164, cysteine 209, cysteine 212, and histidine 213 together coordinate heme c. Ca(2+) is bound by residues glutamate 215, tyrosine 216, lysine 261, and glutamine 263. Tyrosine 216 contacts substrate. Histidine 264 provides a ligand contact to substrate. Heme c is bound by residues histidine 275, cysteine 282, cysteine 285, histidine 286, histidine 301, cysteine 314, cysteine 317, histidine 318, and histidine 393.

Belongs to the cytochrome c-552 family. Ca(2+) is required as a cofactor. The cofactor is heme c.

It localises to the periplasm. The catalysed reaction is 6 Fe(III)-[cytochrome c] + NH4(+) + 2 H2O = 6 Fe(II)-[cytochrome c] + nitrite + 8 H(+). The protein operates within nitrogen metabolism; nitrate reduction (assimilation). Its function is as follows. Catalyzes the reduction of nitrite to ammonia, consuming six electrons in the process. This chain is Cytochrome c-552, found in Salmonella dublin (strain CT_02021853).